The following is a 461-amino-acid chain: Putative aldehyde dehydrogenase FUS7 (461 aa).

220 to 225 provides a ligand contact to NAD(+); the sequence is GSTATG. Catalysis depends on residues E242 and C276.

It belongs to the aldehyde dehydrogenase family.

The enzyme catalyses an aldehyde + NAD(+) + H2O = a carboxylate + NADH + 2 H(+). In terms of biological role, putative aldehyde dehydrogenase; part of the gene cluster that mediates the biosynthesis of the mycotoxin fusarin C. Within the cluster, FUS1, FUS2, FUS8 and FUS9 are sufficient for fusarin production. The other FUS cluster members are not essential for fusarin C biosynthesis. The protein is Putative aldehyde dehydrogenase FUS7 of Gibberella moniliformis (strain M3125 / FGSC 7600) (Maize ear and stalk rot fungus).